The following is a 660-amino-acid chain: GTP-binding protein BRASSINAZOLE INSENSITIVE PALE GREEN 2, chloroplastic (660 aa).

The transit peptide at 1–53 directs the protein to the chloroplast; that stretch reads MVVLISSTVTICNVKPKLEDGNFRVSRLIHRPEVPFFSGLSNEKKKKCAVSVM. 2 disordered regions span residues 127–158 and 191–212; these read EGDEHVENDELAGFEMVDDDADEEEEGEDDEM and NDVELDGFAPAGVGYGNVTEEK. Positions 130–158 are enriched in acidic residues; that stretch reads EHVENDELAGFEMVDDDADEEEEGEDDEM. Residues 273–457 form the CP-type G domain; it reads STRLIKPMSN…MYDTPGLLHP (185 aa).

The protein belongs to the TRAFAC class YlqF/YawG GTPase family. Binds to chloroplast 16S and 23S ribosomal RNAs. In terms of tissue distribution, mostly expressed in stems, petioles, leaves and flowers and, at low levels, also in roots.

It localises to the plastid. Its subcellular location is the chloroplast stroma. Its function is as follows. Required for brassinosteroid- (BR) mediated post-transcriptional and translational regulation in the chloroplast, including accumulation of chloroplast rRNA. Involved in chloroplast differentiation. This is GTP-binding protein BRASSINAZOLE INSENSITIVE PALE GREEN 2, chloroplastic from Arabidopsis thaliana (Mouse-ear cress).